The chain runs to 780 residues: Phosphoenolpyruvate synthase (780 aa).

The active-site Tele-phosphohistidine intermediate is the His-409. Substrate is bound by residues Arg-499, Arg-566, Glu-668, Gly-689, Ser-690, Asn-691, and Asp-692. Glu-668 contacts Mg(2+). Position 692 (Asp-692) interacts with Mg(2+).

It belongs to the PEP-utilizing enzyme family. Mg(2+) serves as cofactor.

The catalysed reaction is pyruvate + ATP + H2O = phosphoenolpyruvate + AMP + phosphate + 2 H(+). It participates in carbohydrate biosynthesis; gluconeogenesis. In terms of biological role, catalyzes the phosphorylation of pyruvate to phosphoenolpyruvate. In Deinococcus radiodurans (strain ATCC 13939 / DSM 20539 / JCM 16871 / CCUG 27074 / LMG 4051 / NBRC 15346 / NCIMB 9279 / VKM B-1422 / R1), this protein is Phosphoenolpyruvate synthase (ppsA).